A 214-amino-acid polypeptide reads, in one-letter code: Alpha-S1-casein (214 aa).

An N-terminal signal peptide occupies residues 1–15; sequence MKLLILTCLVAVALA. Phosphoserine occurs at positions 63, 79, 81, 82, 83, and 90. 2 repeats span residues 85–99 and 125–140; these read EIVP…IQKE and EIVP…SMKE.

The protein belongs to the alpha-casein family. As to expression, mammary gland specific. Secreted in milk.

The protein resides in the secreted. In terms of biological role, important role in the capacity of milk to transport calcium phosphate. In Bubalus bubalis (Domestic water buffalo), this protein is Alpha-S1-casein (CSN1S1).